A 189-amino-acid polypeptide reads, in one-letter code: Ras-like protein 1 (189 aa).

Residue 10-17 (GAGGVGKS) coordinates GTP. Residues 32 to 40 (YDPTIEDSY) carry the Effector region motif. GTP is bound by residues 57-61 (DTAGQ) and 116-119 (NKCD). Cysteine methyl ester is present on Cys186. A lipid anchor (S-geranylgeranyl cysteine) is attached at Cys186. A propeptide spans 187–189 (KML) (removed in mature form).

Belongs to the small GTPase superfamily. Ras family.

Its subcellular location is the cell membrane. It catalyses the reaction GTP + H2O = GDP + phosphate + H(+). Alternates between an inactive form bound to GDP and an active form bound to GTP. Activated by a guanine nucleotide-exchange factor (GEF) and inactivated by a GTPase-activating protein (GAP). In terms of biological role, ras proteins bind GDP/GTP and possess intrinsic GTPase activity. Plays a role in eye development by regulating cell growth, survival of postmitotic ommatidial cells and differentiation of photoreceptor cells. During larval development, mediates Ptth/tor signaling leading to the production of ecdysone, a hormone required for the initiation of metamorphosis. The sequence is that of Ras-like protein 1 from Drosophila virilis (Fruit fly).